We begin with the raw amino-acid sequence, 254 residues long: 3-dehydroquinate dehydratase (254 aa).

Residues 47–49 (EFR) and R83 contribute to the 3-dehydroquinate site. H144 (proton donor/acceptor) is an active-site residue. The active-site Schiff-base intermediate with substrate is K171. The 3-dehydroquinate site is built by R213, S232, and Q236.

This sequence belongs to the type-I 3-dehydroquinase family. Homodimer.

It carries out the reaction 3-dehydroquinate = 3-dehydroshikimate + H2O. The protein operates within metabolic intermediate biosynthesis; chorismate biosynthesis; chorismate from D-erythrose 4-phosphate and phosphoenolpyruvate: step 3/7. Functionally, involved in the third step of the chorismate pathway, which leads to the biosynthesis of aromatic amino acids. Catalyzes the cis-dehydration of 3-dehydroquinate (DHQ) and introduces the first double bond of the aromatic ring to yield 3-dehydroshikimate. The protein is 3-dehydroquinate dehydratase of Neisseria gonorrhoeae (strain ATCC 700825 / FA 1090).